A 546-amino-acid polypeptide reads, in one-letter code: Carotenoid 9,10(9',10')-cleavage dioxygenase (546 aa).

Positions 226, 274, 340, and 530 each coordinate Fe cation.

It belongs to the carotenoid oxygenase family. Fe(2+) is required as a cofactor. In vegetative and floral tissues.

The protein resides in the cytoplasm. The enzyme catalyses all-trans-zeaxanthin + 2 O2 = 4,9-dimethyldodeca-2,4,6,8,10-pentaenedial + 2 (3R)-hydroxy-beta-ionone. Cleaves a variety of carotenoids symmetrically at both the 9-10 and 9'-10' double bonds. Catalyzes the formation of 4,9-dimethyldodeca-2,4,6,8,10-pentaene-1,12-dialdehyde and probably hydroxydihydro-beta-ionone from zeaxanthin. This Crocus sativus (Saffron) protein is Carotenoid 9,10(9',10')-cleavage dioxygenase (CCD).